The chain runs to 421 residues: L-evernosamine nitrososynthase (421 aa).

This sequence belongs to the acyl-CoA dehydrogenase family. As to quaternary structure, homotetramer. FAD is required as a cofactor.

The catalysed reaction is dTDP-beta-L-evernosamine + 2 NADPH + 2 O2 + H(+) = dTDP-2,3,6-trideoxy-3-C-methyl-4-O-methyl-3-nitroso-beta-L-arabino-hexopyranose + 2 NADP(+) + 3 H2O. The enzyme catalyses dTDP-beta-L-evernosamine + NADPH + O2 = dTDP-N-hydroxy-beta-L-evernosamine + NADP(+) + H2O. It catalyses the reaction dTDP-N-hydroxy-beta-L-evernosamine + NADPH + O2 + H(+) = dTDP-2,3,6-trideoxy-3-C-methyl-4-O-methyl-3-nitroso-beta-L-arabino-hexopyranose + NADP(+) + 2 H2O. The protein operates within antibiotic biosynthesis. Functionally, nitrososynthase involved in the biosynthesis of everninomicin, a broad spectrum orthosomycin antibiotic. Catalyzes the double-oxidation of TDP-L-evernosamine to TDP-L-evernitrosose. The enzyme first oxidizes the substrate to a transient hydroxylamino intermediate, which is then further oxidized to nitroso sugar. The nitroso group is probably spontaneously oxidized giving TDP-L-evernitrose. In vitro, catalyzes the double-oxidation of TDP-L-epi-vancosamine to TDP-L-epi-vancosonitrose. Can also use biosynthetic progenitors of TDP-L-epi-vancosamine, but progenitors solely undergo single-oxidation reactions and terminate in the hydroxylamine oxidation state. The protein is L-evernosamine nitrososynthase of Micromonospora sp. (strain ATCC 39149 / NRRL 15099 / SCC 1413).